Here is a 126-residue protein sequence, read N- to C-terminus: Holo-[acyl-carrier-protein] synthase (126 aa).

Asp-8 and Glu-60 together coordinate Mg(2+).

It belongs to the P-Pant transferase superfamily. AcpS family. Requires Mg(2+) as cofactor.

It is found in the cytoplasm. The enzyme catalyses apo-[ACP] + CoA = holo-[ACP] + adenosine 3',5'-bisphosphate + H(+). In terms of biological role, transfers the 4'-phosphopantetheine moiety from coenzyme A to a Ser of acyl-carrier-protein. This chain is Holo-[acyl-carrier-protein] synthase, found in Ehrlichia canis (strain Jake).